A 228-amino-acid polypeptide reads, in one-letter code: Heat shock 70-related protein 4 (228 aa).

Positions 57–80 (RWHEPPGNTVFDEAHDRPQVRRPD) are disordered. Over residues 68–80 (DEAHDRPQVRRPD) the composition is skewed to basic and acidic residues.

The protein belongs to the heat shock protein 70 family.

In Leishmania major, this protein is Heat shock 70-related protein 4 (HSP70.4).